Consider the following 63-residue polypeptide: MKIHYLLFAFILVMLSPLAAFSQLINSPVTCMSYGGSCQRSCNGGFRLGGHCGHPKIRCCRRK.

The signal sequence occupies residues 1–22; that stretch reads MKIHYLLFAFILVMLSPLAAFS. Glutamine 23 bears the Pyrrolidone carboxylic acid mark. Disulfide bonds link cysteine 31–cysteine 59, cysteine 38–cysteine 52, and cysteine 42–cysteine 60.

This sequence belongs to the beta-defensin family. In terms of tissue distribution, predominantly expressed in skeletal muscle, also expressed in esophagus, tongue, and trachea. Also expressed in lung when induced by lipopolysaccharide.

The protein resides in the secreted. Its function is as follows. Has potent antibacterial activity against E.coli (ATCC 25922). This chain is Beta-defensin 6 (Defb6), found in Mus musculus (Mouse).